The chain runs to 381 residues: cAMP-dependent protein kinase type I-alpha regulatory subunit (381 aa).

At Met1 the chain carries N-acetylmethionine. Ala2 carries the N-acetylalanine; in cAMP-dependent protein kinase type I-alpha regulatory subunit, N-terminally processed modification. Residues 2–136 (ASGSMATSEE…ALAKAIEKNV (135 aa)) are dimerization and phosphorylation. Residue Ser3 is modified to Phosphoserine. The tract at residues 73–96 (IRTDSREDEISPPPPNPVVKGRRR) is disordered. Thr75 is modified (phosphothreonine). Phosphoserine occurs at positions 77 and 83. Positions 96–100 (RRGAI) match the Pseudophosphorylation motif motif. Ser101 bears the Phosphoserine mark. Residues 137–254 (LFSH…SKVS), Glu202, Arg211, 255–381 (ILES…SLSV), Glu326, and Arg335 each bind 3',5'-cyclic AMP. Ser258 carries the post-translational modification Phosphoserine.

It belongs to the cAMP-dependent kinase regulatory chain family. The inactive holoenzyme is composed of two regulatory chains and two catalytic chains. Activation by cAMP releases the two active catalytic monomers and the regulatory dimer. Interacts with PRKACA and PRKACB. PRKAR1A also interacts with RFC2; the complex may be involved in cell survival. Interacts with AKAP4. Interacts with RARA; the interaction occurs in the presence of cAMP or FSH and regulates RARA transcriptional activity. Interacts with the phosphorylated form of PJA2. Interacts with PRKX; regulates this cAMP-dependent protein kinase. Interacts with CBFA2T3. Interacts with smAKAP; this interaction may target PRKAR1A to the plasma membrane. Interacts with AICDA. In terms of processing, the pseudophosphorylation site binds to the substrate-binding region of the catalytic chain, resulting in the inhibition of its activity.

The protein localises to the cell membrane. Functionally, regulatory subunit of the cAMP-dependent protein kinases involved in cAMP signaling in cells. This Mus musculus (Mouse) protein is cAMP-dependent protein kinase type I-alpha regulatory subunit (Prkar1a).